The following is a 220-amino-acid chain: UPF0643 protein PB2B2.08 (220 aa).

Belongs to the UPF0643 family.

It is found in the cytoplasm. It localises to the nucleus. The protein is UPF0643 protein PB2B2.08 of Schizosaccharomyces pombe (strain 972 / ATCC 24843) (Fission yeast).